The following is a 280-amino-acid chain: 4-deoxy-L-threo-5-hexosulose-uronate ketol-isomerase (280 aa).

Positions 198, 200, 205, and 247 each coordinate Zn(2+).

This sequence belongs to the KduI family. Zn(2+) is required as a cofactor.

It catalyses the reaction 5-dehydro-4-deoxy-D-glucuronate = 3-deoxy-D-glycero-2,5-hexodiulosonate. It participates in glycan metabolism; pectin degradation; 2-dehydro-3-deoxy-D-gluconate from pectin: step 4/5. Catalyzes the isomerization of 5-dehydro-4-deoxy-D-glucuronate to 3-deoxy-D-glycero-2,5-hexodiulosonate. This is 4-deoxy-L-threo-5-hexosulose-uronate ketol-isomerase from Bacteroides fragilis (strain YCH46).